A 140-amino-acid polypeptide reads, in one-letter code: 3-hydroxyacyl-[acyl-carrier-protein] dehydratase FabZ (140 aa).

His-47 is an active-site residue.

It belongs to the thioester dehydratase family. FabZ subfamily.

Its subcellular location is the cytoplasm. The enzyme catalyses a (3R)-hydroxyacyl-[ACP] = a (2E)-enoyl-[ACP] + H2O. In terms of biological role, involved in unsaturated fatty acids biosynthesis. Catalyzes the dehydration of short chain beta-hydroxyacyl-ACPs and long chain saturated and unsaturated beta-hydroxyacyl-ACPs. The sequence is that of 3-hydroxyacyl-[acyl-carrier-protein] dehydratase FabZ from Streptococcus pneumoniae serotype 2 (strain D39 / NCTC 7466).